Here is a 97-residue protein sequence, read N- to C-terminus: Citrate lyase acyl carrier protein 2 (97 aa).

S14 bears the O-(phosphoribosyl dephospho-coenzyme A)serine mark.

Belongs to the CitD family. As to quaternary structure, oligomer with a subunit composition of (alpha,beta,gamma)6.

Its subcellular location is the cytoplasm. Covalent carrier of the coenzyme of citrate lyase. The protein is Citrate lyase acyl carrier protein 2 of Salmonella paratyphi A (strain ATCC 9150 / SARB42).